A 363-amino-acid chain; its full sequence is Putative aryl-alcohol dehydrogenase AAD3 (363 aa).

This sequence belongs to the aldo/keto reductase family. Aldo/keto reductase 2 subfamily.

The protein is Putative aryl-alcohol dehydrogenase AAD3 (AAD3) of Saccharomyces cerevisiae (strain ATCC 204508 / S288c) (Baker's yeast).